We begin with the raw amino-acid sequence, 506 residues long: ESX-5 secretion system ATPase EccB5 (506 aa).

Residues 56–76 (VVASVSAALVICLGALLWSFI) traverse the membrane as a helical segment.

The protein belongs to the EccB family. As to quaternary structure, part of the ESX-5 / type VII secretion system (T7SS), which is composed of cytosolic and membrane components. The ESX-5 membrane complex is composed of EccB5, EccC5, EccD5 and EccE5.

The protein localises to the cell inner membrane. An ATPase. Part of the ESX-5 specialized secretion system, which is responsible for the secretion of EsxN and a number of PE_PGRS and PPE proteins, including PPE41. This Mycobacterium tuberculosis (strain CDC 1551 / Oshkosh) protein is ESX-5 secretion system ATPase EccB5.